The following is a 352-amino-acid chain: tRNA-specific 2-thiouridylase MnmA (352 aa).

ATP-binding positions include 11–18 and Met-37; that span reads AMSGGVDS. Cys-101 acts as the Nucleophile in catalysis. Cys-101 and Cys-197 are oxidised to a cystine. Gly-125 is a binding site for ATP. Positions 147 to 149 are interaction with tRNA; it reads KDQ. The Cysteine persulfide intermediate role is filled by Cys-197. Positions 302–303 are interaction with tRNA; sequence RY.

It belongs to the MnmA/TRMU family.

Its subcellular location is the cytoplasm. It catalyses the reaction S-sulfanyl-L-cysteinyl-[protein] + uridine(34) in tRNA + AH2 + ATP = 2-thiouridine(34) in tRNA + L-cysteinyl-[protein] + A + AMP + diphosphate + H(+). Functionally, catalyzes the 2-thiolation of uridine at the wobble position (U34) of tRNA, leading to the formation of s(2)U34. This Syntrophotalea carbinolica (strain DSM 2380 / NBRC 103641 / GraBd1) (Pelobacter carbinolicus) protein is tRNA-specific 2-thiouridylase MnmA.